Consider the following 296-residue polypeptide: MSDKHINLVIVTGMSGAGKTVAIQSFEDLGYFTIDNMPPALVPKFLELIEQTNENRRVALVVDMRSRLFFKEINSTLDSIESNPSIDFRILFLDATDGELVSRYKETRRSHPLAADGRVLDGIRLERELLSPLKSMSQHVVDTTKLTPRQLRKTISDQFSEGSNQPSFRIEVMSFGFKYGLPLDADLVFDVRFLPNPYYQVELREKTGLDEDVFNYVMSHPESEVFYKHLLNLIVPILPAYQKEGKSVLTVAIGCTGGQHRSVAFAHCLAESLATDWSVNESHRDQNRRKETVNRS.

13-20 (GMSGAGKT) lines the ATP pocket. 63-66 (DMRS) provides a ligand contact to GTP.

This sequence belongs to the RapZ-like family.

Its function is as follows. Displays ATPase and GTPase activities. This Streptococcus pyogenes serotype M12 (strain MGAS2096) protein is Nucleotide-binding protein MGAS2096_Spy0550.